A 495-amino-acid chain; its full sequence is UDP-N-acetylmuramoyl-L-alanyl-D-glutamate--2,6-diaminopimelate ligase (495 aa).

UDP-N-acetyl-alpha-D-muramoyl-L-alanyl-D-glutamate contacts are provided by residues leucine 27, serine 29, and 44–46; that span reads HQT. Position 116–122 (116–122) interacts with ATP; it reads GTNGKTT. UDP-N-acetyl-alpha-D-muramoyl-L-alanyl-D-glutamate is bound by residues asparagine 157, 158-159, serine 185, glutamine 191, and arginine 193; that span reads TT. Lysine 225 bears the N6-carboxylysine mark. Meso-2,6-diaminopimelate is bound by residues arginine 390, 414-417, glycine 465, and glutamate 469; that span reads DNPR. The Meso-diaminopimelate recognition motif motif lies at 414–417; it reads DNPR.

Belongs to the MurCDEF family. MurE subfamily. Requires Mg(2+) as cofactor. In terms of processing, carboxylation is probably crucial for Mg(2+) binding and, consequently, for the gamma-phosphate positioning of ATP.

The protein resides in the cytoplasm. It carries out the reaction UDP-N-acetyl-alpha-D-muramoyl-L-alanyl-D-glutamate + meso-2,6-diaminopimelate + ATP = UDP-N-acetyl-alpha-D-muramoyl-L-alanyl-gamma-D-glutamyl-meso-2,6-diaminopimelate + ADP + phosphate + H(+). It functions in the pathway cell wall biogenesis; peptidoglycan biosynthesis. Functionally, catalyzes the addition of meso-diaminopimelic acid to the nucleotide precursor UDP-N-acetylmuramoyl-L-alanyl-D-glutamate (UMAG) in the biosynthesis of bacterial cell-wall peptidoglycan. This is UDP-N-acetylmuramoyl-L-alanyl-D-glutamate--2,6-diaminopimelate ligase from Sodalis glossinidius (strain morsitans).